Consider the following 216-residue polypeptide: Pyridoxine/pyridoxamine 5'-phosphate oxidase (216 aa).

FMN contacts are provided by residues 64–69 (RVVLLK), 79–80 (FT), K85, K86, and Q108. K69 lines the substrate pocket. Y126, R130, and S134 together coordinate substrate. FMN is bound by residues 143 to 144 (QS) and W188. 194-196 (RKH) provides a ligand contact to substrate. R198 contacts FMN.

It belongs to the pyridoxamine 5'-phosphate oxidase family. As to quaternary structure, homodimer. FMN serves as cofactor.

The catalysed reaction is pyridoxamine 5'-phosphate + O2 + H2O = pyridoxal 5'-phosphate + H2O2 + NH4(+). It catalyses the reaction pyridoxine 5'-phosphate + O2 = pyridoxal 5'-phosphate + H2O2. It participates in cofactor metabolism; pyridoxal 5'-phosphate salvage; pyridoxal 5'-phosphate from pyridoxamine 5'-phosphate: step 1/1. It functions in the pathway cofactor metabolism; pyridoxal 5'-phosphate salvage; pyridoxal 5'-phosphate from pyridoxine 5'-phosphate: step 1/1. Catalyzes the oxidation of either pyridoxine 5'-phosphate (PNP) or pyridoxamine 5'-phosphate (PMP) into pyridoxal 5'-phosphate (PLP). The chain is Pyridoxine/pyridoxamine 5'-phosphate oxidase from Wolbachia pipientis wMel.